We begin with the raw amino-acid sequence, 138 residues long: Growth factor (138 aa).

Residues 1–19 form the signal peptide; that stretch reads MSMKYLMLLFAAMIIRSFA. Asn-34 carries an N-linked (GlcNAc...) asparagine; by host glycan. The EGF-like domain occupies 41 to 81; the sequence is AIRLCGPEGDGYCLHGDCIHARDIDGMYCRCSHGYTGIRCQ. 3 disulfide bridges follow: Cys-45–Cys-58, Cys-53–Cys-69, and Cys-71–Cys-80. The N-linked (GlcNAc...) asparagine; by host glycan is linked to Asn-95.

Belongs to the orthopoxvirus OPG019 family.

Its subcellular location is the secreted. Its function is as follows. Stimulates cellular proliferation (hyperplasia)and mobility around infected cells to promote rapid and efficient spread of infection. The chain is Growth factor (OPG019) from Rabbitpox virus (strain Utrecht) (RPV).